A 921-amino-acid polypeptide reads, in one-letter code: MTEATGIVGEFLTLKEGTDADLLAMQCGDFYEFFAEDAEIVADELDLKVSQKSSHGSSYPMAGVPVDDLTPYVSALVERGYRVAIADQHETENGHAREITRVVTPGTHLETGDESAQYLAAVVREASRDSGDTYGIAATDVTTGQFQVTQLDDADAGEALTELYTFGPAEILPGPELRNDDEFLDRLRERTDAALTLHDSASFEPGRASHTVREQFGSETVDSVGIGDQNVAVRAAGAVLSYVEDTGVGTLAAVTRLQAYGERDHVDLDATTQRNLELTETMQGDSSGSLFDTIDHTVTAAGGRLLQQWLQRPRRNRAELQRRQSCVAALSEAAMARERIRETLSDAYDLERLAARATSGSADARDLRAVQETLALLGQVADAVTETERLAESPLADALDGADREAADSLAAELDSALVADPPGTVRQGGLFKRGHDDDLDEIIDEHEAALEWLETLPDREKERTGITHLSVDRNKTDGYYIQVGKSETDAVPEKYQHIKTLKNSKRYTTPELDEKERDVLRLEERRHDMEYEHFQRLRARVAEHATLLQDVGRTLAELDAFASLAVHAVENDWARPAVVDGNELSIEAGRHPVVEQTTEFVPNDLYMDDDRQFLIVTGPNMSGKSTYMRQAALITLLAQVGSFVPARSATVGLVDGIFTRVGALDELAQGRSTFMVEMQELSNILHSATEESLVILDEVGRGTATFDGISIAWAATEYIVNSIQSKTLFATHYHELTALGEELPTVENVHVAVDGEPRSAGSDGDVTFLRTVRDGPTDRSYGVHVADLAGVPEPVVDRSQAVLDRLRDDKAIEIRGSEQNDGGTTQAVFDLDSGQFRDGAAQSGGAAAGSTAEPVATDGDPEHAPGEAAAEGPKGDERAASLDSETEAVLSELTELDVNETPPVELMAKVQEWQAELDDE.

An ATP-binding site is contributed by 619–626 (GPNMSGKS). Residues 837–887 (FRDGAAQSGGAAAGSTAEPVATDGDPEHAPGEAAAEGPKGDERAASLDSET) are disordered. Over residues 840–853 (GAAQSGGAAAGSTA) the composition is skewed to low complexity.

This sequence belongs to the DNA mismatch repair MutS family.

In terms of biological role, this protein is involved in the repair of mismatches in DNA. It is possible that it carries out the mismatch recognition step. This protein has a weak ATPase activity. This chain is DNA mismatch repair protein MutS 1, found in Haloarcula marismortui (strain ATCC 43049 / DSM 3752 / JCM 8966 / VKM B-1809) (Halobacterium marismortui).